The sequence spans 349 residues: Protein RecA (349 aa).

65 to 72 (GPESSGKT) contributes to the ATP binding site. The disordered stretch occupies residues 329–349 (KASDQTAAHDETEEEPDLLES). A compositionally biased stretch (acidic residues) spans 339-349 (ETEEEPDLLES).

This sequence belongs to the RecA family.

The protein localises to the cytoplasm. Its function is as follows. Can catalyze the hydrolysis of ATP in the presence of single-stranded DNA, the ATP-dependent uptake of single-stranded DNA by duplex DNA, and the ATP-dependent hybridization of homologous single-stranded DNAs. It interacts with LexA causing its activation and leading to its autocatalytic cleavage. The sequence is that of Protein RecA from Acinetobacter baylyi (strain ATCC 33305 / BD413 / ADP1).